Consider the following 169-residue polypeptide: Transcription antitermination protein NusB (169 aa).

Residues 1–23 are disordered; it reads MADSKKPAIKKPVPKGDRKANRR.

The protein belongs to the NusB family.

In terms of biological role, involved in transcription antitermination. Required for transcription of ribosomal RNA (rRNA) genes. Binds specifically to the boxA antiterminator sequence of the ribosomal RNA (rrn) operons. The polypeptide is Transcription antitermination protein NusB (Rhodopseudomonas palustris (strain HaA2)).